The following is a 311-amino-acid chain: tRNA-cytidine(32) 2-sulfurtransferase (311 aa).

The short motif at 47–52 (SGGKDS) is the PP-loop motif element. [4Fe-4S] cluster contacts are provided by C122, C125, and C213.

This sequence belongs to the TtcA family. In terms of assembly, homodimer. Mg(2+) is required as a cofactor. It depends on [4Fe-4S] cluster as a cofactor.

It localises to the cytoplasm. It catalyses the reaction cytidine(32) in tRNA + S-sulfanyl-L-cysteinyl-[cysteine desulfurase] + AH2 + ATP = 2-thiocytidine(32) in tRNA + L-cysteinyl-[cysteine desulfurase] + A + AMP + diphosphate + H(+). It functions in the pathway tRNA modification. Catalyzes the ATP-dependent 2-thiolation of cytidine in position 32 of tRNA, to form 2-thiocytidine (s(2)C32). The sulfur atoms are provided by the cysteine/cysteine desulfurase (IscS) system. In Salmonella paratyphi B (strain ATCC BAA-1250 / SPB7), this protein is tRNA-cytidine(32) 2-sulfurtransferase.